The sequence spans 590 residues: Threonine dehydratase biosynthetic, chloroplastic (590 aa).

The N-terminal 44 residues, 1–44 (MLSTSTTNSSILPFRSRASSSTFIARPPANFNSIFTTSVRVFPI), are a transit peptide targeting the chloroplast. The residue at position 139 (Lys139) is an N6-(pyridoxal phosphate)lysine. 2 ACT-like domains span residues 416–488 (ALLG…NISH) and 509–580 (EVFV…IDQY).

The protein belongs to the serine/threonine dehydratase family. Pyridoxal 5'-phosphate serves as cofactor. In terms of tissue distribution, found at higher levels in flowers than in other organs.

The protein resides in the plastid. It localises to the chloroplast. The catalysed reaction is L-threonine = 2-oxobutanoate + NH4(+). It participates in amino-acid biosynthesis; L-isoleucine biosynthesis; 2-oxobutanoate from L-threonine: step 1/1. With respect to regulation, allosterically inhibited by isoleucine. In Cicer arietinum (Chickpea), this protein is Threonine dehydratase biosynthetic, chloroplastic.